A 236-amino-acid polypeptide reads, in one-letter code: Lipoarabinomannan carrier protein LprG (236 aa).

Residues 1–25 form the signal peptide; sequence MQTRPRFAVQSLFAILATAAALVAG. A lipid anchor (N-palmitoyl cysteine) is attached at Cys26. Cys26 carries the S-diacylglycerol cysteine lipid modification.

It belongs to the LppX/LprAFG lipoprotein family. As to quaternary structure, interacts with itself, Ag85A (MSMEG_6398), LppI (MSMEG_3851) and LppK (MSMEG_3904) in vivo.

The protein localises to the cell inner membrane. Its subcellular location is the secreted. The protein resides in the cell wall. Functionally, helps membrane protein MSMEG_3069/MSMEI_2992 (P55) transport triacylglycerides (TAG) across the inner cell membrane into the periplasm and probably ultimately to the outer membrane. Binds TAG in its hydrophobic cavity and transfers it between lipid bilayers. TAG probably regulates lipid metabolism and growth regulation and plays a structural role in the outer membrane. Also binds mannosides, lipoarabinomannan and lipomannan and various glycolipids in the same cavity. Required for MSMEG_3069/MSMEI_2992 export activity. Export of ethidium bromide by MSMEG_3069/MSMEI_2992 can be complemented by the equivalent operon from M.tuberculosis (lprG-Rv1410c). Involved in mycolylation. This is Lipoarabinomannan carrier protein LprG from Mycolicibacterium smegmatis (strain ATCC 700084 / mc(2)155) (Mycobacterium smegmatis).